Consider the following 191-residue polypeptide: dTTP/UTP pyrophosphatase (191 aa).

Aspartate 69 functions as the Proton acceptor in the catalytic mechanism.

This sequence belongs to the Maf family. YhdE subfamily. A divalent metal cation is required as a cofactor.

It localises to the cytoplasm. The enzyme catalyses dTTP + H2O = dTMP + diphosphate + H(+). It catalyses the reaction UTP + H2O = UMP + diphosphate + H(+). Its function is as follows. Nucleoside triphosphate pyrophosphatase that hydrolyzes dTTP and UTP. May have a dual role in cell division arrest and in preventing the incorporation of modified nucleotides into cellular nucleic acids. The polypeptide is dTTP/UTP pyrophosphatase (Desulforamulus reducens (strain ATCC BAA-1160 / DSM 100696 / MI-1) (Desulfotomaculum reducens)).